A 266-amino-acid polypeptide reads, in one-letter code: Chymotrypsin-like elastase family member 1 (266 aa).

Positions Met1 to Ser16 are cleaved as a signal peptide. Residues Thr17–Arg26 constitute a propeptide, activation peptide. The Peptidase S1 domain maps to Val27 to Ala264. A disulfide bridge connects residues Cys56 and Cys72. His71 acts as the Charge relay system in catalysis. Residues Glu85, Asn87, Gln90, and Glu95 each coordinate Ca(2+). Asn87 carries an N-linked (GlcNAc...) asparagine glycan. Asp119 (charge relay system) is an active-site residue. 3 disulfides stabilise this stretch: Cys153/Cys220, Cys184/Cys200, and Cys210/Cys240. Residue Ser214 is the Charge relay system of the active site. Asn241 carries an N-linked (GlcNAc...) asparagine glycan.

It belongs to the peptidase S1 family. Elastase subfamily. It depends on Ca(2+) as a cofactor.

It is found in the secreted. The enzyme catalyses Hydrolysis of proteins, including elastin. Preferential cleavage: Ala-|-Xaa.. In terms of biological role, serine proteases that hydrolyze many proteins in addition to elastin. The polypeptide is Chymotrypsin-like elastase family member 1 (CELA1) (Felis catus (Cat)).